We begin with the raw amino-acid sequence, 801 residues long: Leucine--tRNA ligase (801 aa).

The short motif at 39 to 50 is the 'HIGH' region element; it reads PYPSGAGIHVGH. The 'KMSKS' region motif lies at 578–582; sequence KMSKS. Lys581 is an ATP binding site.

The protein belongs to the class-I aminoacyl-tRNA synthetase family.

The protein resides in the cytoplasm. It carries out the reaction tRNA(Leu) + L-leucine + ATP = L-leucyl-tRNA(Leu) + AMP + diphosphate. This chain is Leucine--tRNA ligase, found in Mesoplasma florum (strain ATCC 33453 / NBRC 100688 / NCTC 11704 / L1) (Acholeplasma florum).